The sequence spans 457 residues: Siroheme synthase (457 aa).

A precorrin-2 dehydrogenase /sirohydrochlorin ferrochelatase region spans residues 1–204 (MDHLPIFCQL…NDQKAITETT (204 aa)). Residues 22–23 (DV) and 43–44 (LA) each bind NAD(+). Residue serine 128 is modified to Phosphoserine. The uroporphyrinogen-III C-methyltransferase stretch occupies residues 216–457 (GEVVLVGAGP…RDKLNWFSNH (242 aa)). Proline 225 is an S-adenosyl-L-methionine binding site. The active-site Proton acceptor is the aspartate 248. The active-site Proton donor is the lysine 270. S-adenosyl-L-methionine-binding positions include 301–303 (GGD), isoleucine 306, 331–332 (TA), methionine 382, and glycine 411.

It in the N-terminal section; belongs to the precorrin-2 dehydrogenase / sirohydrochlorin ferrochelatase family. The protein in the C-terminal section; belongs to the precorrin methyltransferase family.

It catalyses the reaction uroporphyrinogen III + 2 S-adenosyl-L-methionine = precorrin-2 + 2 S-adenosyl-L-homocysteine + H(+). The enzyme catalyses precorrin-2 + NAD(+) = sirohydrochlorin + NADH + 2 H(+). The catalysed reaction is siroheme + 2 H(+) = sirohydrochlorin + Fe(2+). Its pathway is cofactor biosynthesis; adenosylcobalamin biosynthesis; precorrin-2 from uroporphyrinogen III: step 1/1. The protein operates within cofactor biosynthesis; adenosylcobalamin biosynthesis; sirohydrochlorin from precorrin-2: step 1/1. It participates in porphyrin-containing compound metabolism; siroheme biosynthesis; precorrin-2 from uroporphyrinogen III: step 1/1. It functions in the pathway porphyrin-containing compound metabolism; siroheme biosynthesis; siroheme from sirohydrochlorin: step 1/1. Its pathway is porphyrin-containing compound metabolism; siroheme biosynthesis; sirohydrochlorin from precorrin-2: step 1/1. Functionally, multifunctional enzyme that catalyzes the SAM-dependent methylations of uroporphyrinogen III at position C-2 and C-7 to form precorrin-2 via precorrin-1. Then it catalyzes the NAD-dependent ring dehydrogenation of precorrin-2 to yield sirohydrochlorin. Finally, it catalyzes the ferrochelation of sirohydrochlorin to yield siroheme. The chain is Siroheme synthase from Escherichia coli O45:K1 (strain S88 / ExPEC).